The chain runs to 70 residues: Probable ferredoxin TA0517 (70 aa).

2 4Fe-4S ferredoxin-type domains span residues 8 to 36 (TEMD…WLDE) and 37 to 66 (TVIK…AEWF). Positions 17, 20, 23, 27, 46, 49, 52, and 56 each coordinate [4Fe-4S] cluster.

It depends on [4Fe-4S] cluster as a cofactor.

Ferredoxins are iron-sulfur proteins that transfer electrons in a wide variety of metabolic reactions. This Thermoplasma acidophilum (strain ATCC 25905 / DSM 1728 / JCM 9062 / NBRC 15155 / AMRC-C165) protein is Probable ferredoxin TA0517.